Here is a 299-residue protein sequence, read N- to C-terminus: CMRF35-like molecule 8 (299 aa).

Positions 1-17 (MWLPWALLLLWVPGCFA) are cleaved as a signal peptide. At 18–180 (LSKCRTVAGP…TEEVVNSQLP (163 aa)) the chain is on the extracellular side. One can recognise an Ig-like V-type domain in the interval 19–123 (SKCRTVAGPV…HDPVVEVEVS (105 aa)). C36 and C103 are oxidised to a cystine. Residues N83 and N92 are each glycosylated (N-linked (GlcNAc...) asparagine). Residues 181 to 201 (LLLSLLALLLLLLVGASLLAW) form a helical membrane-spanning segment. Over 202–299 (RMFQKWIKAG…DSDYSVIRKT (98 aa)) the chain is Cytoplasmic. The interval 278–299 (RIAAQRPREEEPDSDYSVIRKT) is disordered. Position 293 is a phosphotyrosine (Y293).

This sequence belongs to the CD300 family. Upon tyrosine-phosphorylation, interacts with PTN6/SHP-1 and PTPN11/SHP-2 and INPP5D. Post-translationally, phosphorylated on tyrosine. N-glycosylated. As to expression, expressed not only by natural killer (NK) cells but also by T-cell subsets, B-cells, dendritic cells, mast cells, granulocytes and monocytes.

It is found in the cell membrane. Its function is as follows. Inhibitory receptor which may contribute to the down-regulation of cytolytic activity in natural killer (NK) cells, and to the down-regulation of mast cell degranulation. Negatively regulates the Toll-like receptor (TLR) signaling mediated by MYD88 but not TRIF through activation of PTPN6. The sequence is that of CMRF35-like molecule 8 (CD300A) from Homo sapiens (Human).